The following is a 343-amino-acid chain: N-acetyl-gamma-glutamyl-phosphate reductase (343 aa).

Residue Cys-149 is part of the active site.

This sequence belongs to the NAGSA dehydrogenase family. Type 1 subfamily.

It localises to the cytoplasm. The catalysed reaction is N-acetyl-L-glutamate 5-semialdehyde + phosphate + NADP(+) = N-acetyl-L-glutamyl 5-phosphate + NADPH + H(+). Its pathway is amino-acid biosynthesis; L-arginine biosynthesis; N(2)-acetyl-L-ornithine from L-glutamate: step 3/4. Functionally, catalyzes the NADPH-dependent reduction of N-acetyl-5-glutamyl phosphate to yield N-acetyl-L-glutamate 5-semialdehyde. The chain is N-acetyl-gamma-glutamyl-phosphate reductase from Methanococcus maripaludis (strain C6 / ATCC BAA-1332).